The chain runs to 388 residues: MTASQPAGAVDALLLVSFGGPEGPDDVLPFLRNVTAGRDVPRSRLEVVAEQYRMFGGRSPLNDQNRALAEALRAELPGLPVYWGNRNWAPYLTDTVAEMAAAGVRRAACFVTSAFSSYSGCRQYRENLAAALAALPPALAVPELVKLRLFFDHPGFVEPMVDRCVAALAELPEKARTDAHLLFTAHSLPLSQARASGPRGDAYPRQLRAVAEVIAAGVERVTGVRHPVELAYCSRSGPPAVPWLEPDVGDRLVELAGAGAVGAVVVPLGFVSDHMEVAYDLDVLAAQRAAQVGLPVARAGTVGTDPRFVAMVRELVEEVRNPDLPRRALTEFGPWPQSCAAHCCVPPRQSPQHASRAVTDAAATGRRGDAAILMGNDATSTGRRGERR.

2 residues coordinate Fe-coproporphyrin III: serine 59 and tyrosine 124. Positions 186 and 276 each coordinate Fe(2+). The segment at 349 to 369 (QSPQHASRAVTDAAATGRRGD) is disordered.

It belongs to the ferrochelatase family.

The protein resides in the cytoplasm. The catalysed reaction is Fe-coproporphyrin III + 2 H(+) = coproporphyrin III + Fe(2+). It participates in porphyrin-containing compound metabolism; protoheme biosynthesis. Involved in coproporphyrin-dependent heme b biosynthesis. Catalyzes the insertion of ferrous iron into coproporphyrin III to form Fe-coproporphyrin III. This chain is Coproporphyrin III ferrochelatase, found in Frankia alni (strain DSM 45986 / CECT 9034 / ACN14a).